The primary structure comprises 384 residues: Fructose-1,6-bisphosphate aldolase/phosphatase (384 aa).

The Proton acceptor; for FBP phosphatase activity role is filled by Asp11. Residues Asp11, His18, Asp52, and Asp53 each contribute to the Mg(2+) site. Beta-D-fructose 1,6-bisphosphate is bound at residue His18. His18 lines the dihydroxyacetone phosphate pocket. Tyr90 provides a ligand contact to beta-D-fructose 1,6-bisphosphate. Gln94 is a binding site for Mg(2+). 103 to 104 (GN) provides a ligand contact to beta-D-fructose 1,6-bisphosphate. Asp131 is a Mg(2+) binding site. Lys132 is a beta-D-fructose 1,6-bisphosphate binding site. Dihydroxyacetone phosphate is bound at residue Lys132. Residue Tyr228 is the Proton donor/acceptor; for FBP aldolase activity of the active site. Lys231, Asp232, and Asp233 together coordinate Mg(2+). Lys231 (schiff-base intermediate with DHAP; for FBP aldolase activity) is an active-site residue. Beta-D-fructose 1,6-bisphosphate contacts are provided by residues 241–242 (QH), Arg265, Asp286, and Tyr347. Residues Arg265 and Asp286 each contribute to the dihydroxyacetone phosphate site.

The protein belongs to the FBP aldolase/phosphatase family. Homooctamer; dimer of tetramers. Requires Mg(2+) as cofactor.

The enzyme catalyses beta-D-fructose 1,6-bisphosphate + H2O = beta-D-fructose 6-phosphate + phosphate. It carries out the reaction beta-D-fructose 1,6-bisphosphate = D-glyceraldehyde 3-phosphate + dihydroxyacetone phosphate. The protein operates within carbohydrate biosynthesis; gluconeogenesis. In terms of biological role, catalyzes two subsequent steps in gluconeogenesis: the aldol condensation of dihydroxyacetone phosphate (DHAP) and glyceraldehyde-3-phosphate (GA3P) to fructose-1,6-bisphosphate (FBP), and the dephosphorylation of FBP to fructose-6-phosphate (F6P). The sequence is that of Fructose-1,6-bisphosphate aldolase/phosphatase from Sulfurisphaera tokodaii (strain DSM 16993 / JCM 10545 / NBRC 100140 / 7) (Sulfolobus tokodaii).